We begin with the raw amino-acid sequence, 209 residues long: Protocatechuate 3,4-dioxygenase alpha chain (209 aa).

Arg142 lines the 3,4-dihydroxybenzoate pocket.

This sequence belongs to the intradiol ring-cleavage dioxygenase family. In terms of assembly, the enzyme is an oligomer of 12 copies of the alpha and beta chains. The cofactor is Fe(3+).

It catalyses the reaction 3,4-dihydroxybenzoate + O2 = 3-carboxy-cis,cis-muconate + 2 H(+). Its pathway is aromatic compound metabolism; beta-ketoadipate pathway; 3-carboxy-cis,cis-muconate from 3,4-dihydroxybenzoate: step 1/1. Functionally, plays an essential role in the utilization of numerous aromatic and hydroaromatic compounds via the beta-ketoadipate pathway. This is Protocatechuate 3,4-dioxygenase alpha chain (pcaG) from Acinetobacter baylyi (strain ATCC 33305 / BD413 / ADP1).